Consider the following 765-residue polypeptide: Glycine--tRNA ligase (765 aa).

Residues 1–87 (MSLQLLKALP…LRSAAAEFIM (87 aa)) constitute a mitochondrion transit peptide. A disordered region spans residues 41–73 (TTTKPTPSAPPPPPPTQPQQPAATTSWGTKKQN). Residues 47–58 (PSAPPPPPPTQP) show a composition bias toward pro residues. The region spanning 95-151 (QLAPLRERVQEQGNLVRDLKAKGAPEIDVKKAVAELKARKKLLEDKELALTPSVVSF) is the WHEP-TRS domain. Glycine is bound at residue glutamate 331. ATP-binding positions include 363–365 (RNE) and 374–375 (RV). Glutamate 382 lines the glycine pocket. ATP is bound at residue 489 to 490 (EC). 609–611 (EPS) is a binding site for glycine. Residue arginine 616 coordinates ATP.

Belongs to the class-II aminoacyl-tRNA synthetase family. Homodimer.

Its subcellular location is the mitochondrion. The protein resides in the cytoplasm. It is found in the cell projection. The protein localises to the axon. It carries out the reaction 2 ATP + H(+) = P(1),P(4)-bis(5'-adenosyl) tetraphosphate + diphosphate. It catalyses the reaction tRNA(Gly) + glycine + ATP = glycyl-tRNA(Gly) + AMP + diphosphate. In terms of biological role, catalyzes the ATP-dependent ligation of glycine to the 3'-end of its cognate tRNA, via the formation of an aminoacyl-adenylate intermediate (Gly-AMP). Also produces diadenosine tetraphosphate (Ap4A), a universal pleiotropic signaling molecule needed for cell regulation pathways, by direct condensation of 2 ATPs. Thereby, may play a special role in Ap4A homeostasis. Required for terminal arborization of both dendrites and axons during development. The polypeptide is Glycine--tRNA ligase (Drosophila melanogaster (Fruit fly)).